The chain runs to 466 residues: Zinc finger protein NUTCRACKER (466 aa).

Residues Met-1–Thr-23 show a composition bias toward polar residues. Positions Met-1–Ser-29 are disordered. A Phosphoserine modification is found at Ser-56. The C2H2-type 1 zinc-finger motif lies at Phe-66–His-88. A Phosphothreonine; by KIN10 modification is found at Thr-98. The C2H2-type 2 zinc finger occupies Tyr-107–His-137. Positions Cys-134–Lys-141 match the Nuclear localization signal motif. The C2H2-type 2; degenerate zinc-finger motif lies at Trp-142–Gly-165. Residues Cys-144, Cys-147, His-160, Cys-164, Cys-171, and Cys-173 each coordinate Zn(2+). Residues Tyr-169 to Ala-192 form a CCHC-type 2; atypical zinc finger. Phosphoserine; by KIN10 is present on residues Ser-178 and Ser-182. The segment at Arg-179 to Asp-191 is SHR-binding. Positions 186 and 190 each coordinate Zn(2+).

In terms of assembly, interacts with AKIN10. Post-translationally, inhibition of transcription factor activity by KIN10-mediated phosphorylation at Thr-98, Ser-178 and Ser-182 under sugar deprivation conditions, thus delaying flowering. In terms of tissue distribution, highly expressed in vegetative organs and at lower levels in flowers and siliques. Expressed predominantly in roots. In roots, present in cortex, endodermis, and pericycle layer.

It is found in the nucleus. Functionally, transcription activator that binds to the DNA sequence 5'-CTTTTGTCC-3'. Regulates photoperiodic flowering by modulating sugar transport and metabolism. Regulates SUS1 and SUS4. Transcription factor that regulates tissue boundaries and asymmetric cell division. Contributes to the sequestration of 'SHORT-ROOT' to the nucleus. The protein is Zinc finger protein NUTCRACKER of Arabidopsis thaliana (Mouse-ear cress).